A 432-amino-acid polypeptide reads, in one-letter code: Asparagine--tRNA ligase (432 aa).

The protein belongs to the class-II aminoacyl-tRNA synthetase family. In terms of assembly, homodimer.

The protein resides in the cytoplasm. The enzyme catalyses tRNA(Asn) + L-asparagine + ATP = L-asparaginyl-tRNA(Asn) + AMP + diphosphate + H(+). This chain is Asparagine--tRNA ligase, found in Lactobacillus delbrueckii subsp. bulgaricus (strain ATCC 11842 / DSM 20081 / BCRC 10696 / JCM 1002 / NBRC 13953 / NCIMB 11778 / NCTC 12712 / WDCM 00102 / Lb 14).